We begin with the raw amino-acid sequence, 148 residues long: 3-dehydroquinate dehydratase (148 aa).

3 residues coordinate substrate: Asn74, His80, and Asp87. The active-site Proton donor is His100. Residues 101 to 102 and Arg111 contribute to the substrate site; that span reads LS.

Belongs to the type-II 3-dehydroquinase family. Homododecamer.

The catalysed reaction is 3-dehydroquinate = 3-dehydroshikimate + H2O. Its pathway is metabolic intermediate biosynthesis; chorismate biosynthesis; chorismate from D-erythrose 4-phosphate and phosphoenolpyruvate: step 3/7. The protein is 3-dehydroquinate dehydratase (yqhS) of Bacillus subtilis (strain 168).